The sequence spans 264 residues: Thymidylate synthase (264 aa).

Residue R21 coordinates dUMP. H51 lines the (6R)-5,10-methylene-5,6,7,8-tetrahydrofolate pocket. 126–127 serves as a coordination point for dUMP; that stretch reads RR. Catalysis depends on C146, which acts as the Nucleophile. Residues 166–169, N177, and 207–209 each bind dUMP; these read RSCD and HLY. D169 serves as a coordination point for (6R)-5,10-methylene-5,6,7,8-tetrahydrofolate. A (6R)-5,10-methylene-5,6,7,8-tetrahydrofolate-binding site is contributed by A263.

The protein belongs to the thymidylate synthase family. Bacterial-type ThyA subfamily. In terms of assembly, homodimer.

Its subcellular location is the cytoplasm. The catalysed reaction is dUMP + (6R)-5,10-methylene-5,6,7,8-tetrahydrofolate = 7,8-dihydrofolate + dTMP. The protein operates within pyrimidine metabolism; dTTP biosynthesis. Its function is as follows. Catalyzes the reductive methylation of 2'-deoxyuridine-5'-monophosphate (dUMP) to 2'-deoxythymidine-5'-monophosphate (dTMP) while utilizing 5,10-methylenetetrahydrofolate (mTHF) as the methyl donor and reductant in the reaction, yielding dihydrofolate (DHF) as a by-product. This enzymatic reaction provides an intracellular de novo source of dTMP, an essential precursor for DNA biosynthesis. The sequence is that of Thymidylate synthase from Cronobacter sakazakii (strain ATCC BAA-894) (Enterobacter sakazakii).